The following is a 138-amino-acid chain: Eukaryotic translation initiation factor 1A (138 aa).

Over residues 1–15 (MPKNKGKGGKNRRRG) the composition is skewed to basic residues. Positions 1–28 (MPKNKGKGGKNRRRGKNENENEKRELTY) are disordered. The span at 16–27 (KNENENEKRELT) shows a compositional bias: basic and acidic residues. The S1-like domain occupies 22 to 96 (EKRELTYAEE…EKGDVILKYT (75 aa)).

It belongs to the eIF-1A family.

Seems to be required for maximal rate of protein biosynthesis. Enhances ribosome dissociation into subunits and stabilizes the binding of the initiator Met-tRNA(I) to 40 S ribosomal subunits. This chain is Eukaryotic translation initiation factor 1A (tif11), found in Schizosaccharomyces pombe (strain 972 / ATCC 24843) (Fission yeast).